The primary structure comprises 389 residues: 26S proteasome non-ATPase regulatory subunit 6 (389 aa).

Positions 193-361 constitute a PCI domain; the sequence is DFKQAAELFL…EIVETNRPDS (169 aa).

The protein belongs to the proteasome subunit S10 family. Component of the 19S proteasome regulatory particle complex. The 26S proteasome consists of a 20S core particle (CP) and two 19S regulatory subunits (RP). The regulatory particle is made of a lid composed of 9 subunits including PSMD6, a base containing 6 ATPases and few additional components.

Functionally, component of the 26S proteasome, a multiprotein complex involved in the ATP-dependent degradation of ubiquitinated proteins. This complex plays a key role in the maintenance of protein homeostasis by removing misfolded or damaged proteins, which could impair cellular functions, and by removing proteins whose functions are no longer required. Therefore, the proteasome participates in numerous cellular processes, including cell cycle progression, apoptosis, or DNA damage repair. The sequence is that of 26S proteasome non-ATPase regulatory subunit 6 (PSMD6) from Homo sapiens (Human).